The primary structure comprises 459 residues: Cysteine--tRNA ligase (459 aa).

Position 28 (cysteine 28) interacts with Zn(2+). Positions 30 to 40 match the 'HIGH' region motif; it reads VTVYDLCHIGH. Zn(2+) contacts are provided by cysteine 209, histidine 234, and glutamate 238. A 'KMSKS' region motif is present at residues 266–270; it reads KMSKS. Position 269 (lysine 269) interacts with ATP.

It belongs to the class-I aminoacyl-tRNA synthetase family. In terms of assembly, monomer. Zn(2+) serves as cofactor.

It is found in the cytoplasm. The catalysed reaction is tRNA(Cys) + L-cysteine + ATP = L-cysteinyl-tRNA(Cys) + AMP + diphosphate. This chain is Cysteine--tRNA ligase (cysS), found in Haemophilus influenzae (strain ATCC 51907 / DSM 11121 / KW20 / Rd).